The following is a 120-amino-acid chain: Large ribosomal subunit protein bL12 (120 aa).

Belongs to the bacterial ribosomal protein bL12 family. Homodimer. Part of the ribosomal stalk of the 50S ribosomal subunit. Forms a multimeric L10(L12)X complex, where L10 forms an elongated spine to which 2 to 4 L12 dimers bind in a sequential fashion. Binds GTP-bound translation factors.

Functionally, forms part of the ribosomal stalk which helps the ribosome interact with GTP-bound translation factors. Is thus essential for accurate translation. The chain is Large ribosomal subunit protein bL12 from Lactobacillus gasseri (strain ATCC 33323 / DSM 20243 / BCRC 14619 / CIP 102991 / JCM 1131 / KCTC 3163 / NCIMB 11718 / NCTC 13722 / AM63).